The primary structure comprises 364 residues: Caveolae-associated protein 4 (364 aa).

Residues methionine 1–aspartate 24 form a disordered region. Residues valine 44–glutamine 77 are a coiled coil. Phosphoserine occurs at positions 172 and 173. Residues phenylalanine 202 to valine 226 adopt a coiled-coil conformation. The segment covering arginine 231–lysine 256 has biased composition (basic and acidic residues). Disordered regions lie at residues arginine 231–alanine 283 and serine 311–proline 339. Tyrosine 326 is subject to Phosphotyrosine. Position 336 is a phosphothreonine (threonine 336). Phosphoserine is present on serine 355.

The protein belongs to the CAVIN family. As to quaternary structure, component of the CAVIN complex composed of CAVIN1, CAVIN2, CAVIN3 and CAVIN4. Interacts with CAVIN1, ADRA1A and ADRA1B. Interacts with CAVIN2; this augments the transactivation of NPPA. Interacts with CAV3. Interacts with MAPK1 and MAPK3.

It localises to the cytoplasm. It is found in the myofibril. The protein localises to the sarcomere. The protein resides in the cytosol. Its subcellular location is the cell membrane. It localises to the sarcolemma. It is found in the membrane. The protein localises to the caveola. Modulates the morphology of formed caveolae in cardiomyocytes, but is not required for caveolar formation. Facilitates the recruitment of MAPK1/3 to caveolae within cardiomyocytes and regulates alpha-1 adrenergic receptor-induced hypertrophic responses in cardiomyocytes through MAPK1/3 activation. Contributes to proper membrane localization and stabilization of caveolin-3 (CAV3) in cardiomyocytes. Induces RHOA activation and activates NPPA transcription and myofibrillar organization through the Rho/ROCK signaling pathway. This Homo sapiens (Human) protein is Caveolae-associated protein 4.